Reading from the N-terminus, the 419-residue chain is G protein-activated inward rectifier potassium channel 4 (419 aa).

The Cytoplasmic portion of the chain corresponds to 1 to 86; sequence MAGDSRNAMN…LFTTLVDLKW (86 aa). The residue at position 5 (serine 5) is a Phosphoserine. A helical transmembrane segment spans residues 87–111; sequence RFNLLVFTMVYTVTWLFFGFIWWLI. Residues 112–135 are Extracellular-facing; that stretch reads AYIRGDLDHVGDQEWIPCVENLSG. The helical; Pore-forming intramembrane region spans 136 to 147; the sequence is FVSAFLFSIETE. The pore-forming intramembrane region spans 148–154; it reads TTIGYGF. The Selectivity filter signature appears at 149-154; the sequence is TIGYGF. The Extracellular segment spans residues 155–163; the sequence is RVITEKCPE. A helical membrane pass occupies residues 164-185; that stretch reads GIILLLVQAILGSIVNAFMVGC. Residues 186–419 are Cytoplasmic-facing; sequence MFVKISQPKK…GGSREARGSV (234 aa). The tract at residues 390 to 419 is disordered; the sequence is AEAGLDAEAEQNEEDEPKGLGGSREARGSV. Acidic residues predominate over residues 394 to 405; that stretch reads LDAEAEQNEEDE.

The protein belongs to the inward rectifier-type potassium channel (TC 1.A.2.1) family. KCNJ5 subfamily. As to quaternary structure, associates with KCNJ3/GIRK1 to form a G-protein-activated heteromultimer pore-forming unit. The resulting inward current is much larger. Associates with KCNJ6/GIRK2 to form a G-protein-activated heteromultimer pore-forming unit. Islets, exocrine pancreas and heart. Expressed in the adrenal cortex, particularly the zona glomerulosa.

Its subcellular location is the membrane. It catalyses the reaction K(+)(in) = K(+)(out). Heteromultimer composed of KCNJ3/GIRK1 and KCNJ5/GIRK4 is activated by phosphatidylinositol 4,5 biphosphate (PtdIns(4,5)P2). In terms of biological role, inward rectifier potassium channels are characterized by a greater tendency to allow potassium to flow into the cell rather than out of it. Their voltage dependence is regulated by the concentration of extracellular potassium; as external potassium is raised, the voltage range of the channel opening shifts to more positive voltages. The inward rectification is mainly due to the blockage of outward current by internal magnesium. Can be blocked by external barium. This potassium channel is controlled by G proteins. This Homo sapiens (Human) protein is G protein-activated inward rectifier potassium channel 4 (KCNJ5).